The sequence spans 234 residues: 2-amino-5-formylamino-6-ribosylaminopyrimidin-4(3H)-one 5'-monophosphate deformylase (234 aa).

Fe cation contacts are provided by glutamate 30, histidine 32, aspartate 41, and histidine 111.

It belongs to the creatininase superfamily. FAPy deformylase family. Homodimer. Fe(2+) serves as cofactor. Zn(2+) is required as a cofactor.

It carries out the reaction 2-amino-5-formylamino-6-(5-phospho-D-ribosylamino)pyrimidin-4(3H)-one + H2O = 2,5-diamino-6-(1-D-ribosylamino)pyrimidin-4(3H)-one 5'-phosphate + formate + H(+). The protein operates within cofactor biosynthesis; coenzyme F420 biosynthesis. Its pathway is cofactor biosynthesis; riboflavin biosynthesis. In terms of biological role, catalyzes the hydrolysis of the formamide of 2-amino-5-formylamino-6-ribosylamino-4(3H)-pyrimidinone 5'-monophosphate (FAPy) to form 2,5-diamino-6-ribosylamino-4(3H)-pyrimidinone 5'-phosphate (APy). This is 2-amino-5-formylamino-6-ribosylaminopyrimidin-4(3H)-one 5'-monophosphate deformylase from Methanothermobacter thermautotrophicus (strain ATCC 29096 / DSM 1053 / JCM 10044 / NBRC 100330 / Delta H) (Methanobacterium thermoautotrophicum).